The chain runs to 564 residues: Probable lysosomal cobalamin transporter (564 aa).

Helical transmembrane passes span 8–28, 41–61, 94–114, 144–164, 188–208, 312–332, 375–395, 418–438, and 506–526; these read LIWS…STFI, VTLI…LLPV, TIVY…GIPF, YTLF…FIPT, ALTF…IIYT, LLAG…LCVT, VIFT…IAAF, LLLT…VAVI, and FFGA…LLVL.

The protein belongs to the LIMR family. LMBRD1 subfamily.

The protein localises to the lysosome membrane. Its function is as follows. Probable lysosomal cobalamin transporter. Required to export cobalamin from lysosomes allowing its conversion to cofactors. This is Probable lysosomal cobalamin transporter from Aspergillus clavatus (strain ATCC 1007 / CBS 513.65 / DSM 816 / NCTC 3887 / NRRL 1 / QM 1276 / 107).